A 103-amino-acid chain; its full sequence is Large ribosomal subunit protein uL24 (103 aa).

Belongs to the universal ribosomal protein uL24 family. Part of the 50S ribosomal subunit.

Its function is as follows. One of two assembly initiator proteins, it binds directly to the 5'-end of the 23S rRNA, where it nucleates assembly of the 50S subunit. Functionally, one of the proteins that surrounds the polypeptide exit tunnel on the outside of the subunit. The sequence is that of Large ribosomal subunit protein uL24 from Exiguobacterium sibiricum (strain DSM 17290 / CCUG 55495 / CIP 109462 / JCM 13490 / 255-15).